The sequence spans 635 residues: Sodium- and chloride-dependent creatine transporter 1 (635 aa).

The disordered stretch occupies residues 1 to 28 (MAKKSAENGIYSVSGDEKKGPLIAPGPD). Topologically, residues 1 to 60 (MAKKSAENGIYSVSGDEKKGPLIAPGPDGAPAKGDGPVGLGTPGGRLAVPPRETWTRQMD) are cytoplasmic. A Phosphothreonine modification is found at T42. A helical membrane pass occupies residues 61-81 (FIMSCVGFAVGLGNVWRFPYL). At 82–87 (CYKNGG) the chain is on the extracellular side. Residues 88-108 (GVFLIPYVLIALVGGIPIFFL) form a helical membrane-spanning segment. Topologically, residues 109–138 (EISLGQFMKAGSINVWNICPLFKGLGYASM) are cytoplasmic. A helical membrane pass occupies residues 139–159 (VIVFYCNTYYIMVLAWGFYYL). The Extracellular portion of the chain corresponds to 160–230 (VKSFTTTLPW…LSGGLEVPGA (71 aa)). 2 N-linked (GlcNAc...) asparagine glycosylation sites follow: N192 and N197. A helical transmembrane segment spans residues 231-251 (LNWEVTLCLLACWVLVYFCVW). The Cytoplasmic segment spans residues 252-269 (KGVKSTGKIVYFTATFPY). The chain crosses the membrane as a helical span at residues 270–290 (VVLVVLLVRGVLLPGALDGII). Over 291–304 (YYLKPDWSKLGSPQ) the chain is Extracellular. A helical membrane pass occupies residues 305–325 (VWIDAGTQIFFSYAIGLGALT). Residues 326 to 341 (ALGSYNRFNNNCYKDA) lie on the Cytoplasmic side of the membrane. Residues 342–362 (IILALINSGTSFFAGFVVFSI) form a helical membrane-spanning segment. Residues 363–394 (LGFMAAEQGVHISKVAESGPGLAFIAYPRAVT) lie on the Extracellular side of the membrane. The helical transmembrane segment at 395 to 415 (LMPVAPLWAALFFFMLLLLGL) threads the bilayer. The Cytoplasmic segment spans residues 416-444 (DSQFVGVEGFITGLLDLLPASYYFRFQRE). Residues 445 to 465 (ISVALCCALCFVIDLSMVTDG) traverse the membrane as a helical segment. Residues 466-479 (GMYVFQLFDYYSAS) lie on the Extracellular side of the membrane. The helical transmembrane segment at 480–500 (GTTLLWQAFWECVVVAWVYGA) threads the bilayer. Residues 501–520 (DRFMDDIACMIGYRPCPWMK) are Cytoplasmic-facing. A helical transmembrane segment spans residues 521 to 541 (WCWSFFTPLVCMGIFIFNVVY). Residues 542 to 560 (YEPLVYNNTYVYPWWGEAM) are Extracellular-facing. N-linked (GlcNAc...) asparagine glycosylation occurs at N548. Residues 561–581 (GWAFALSSMLCVPLHLLGCLL) form a helical membrane-spanning segment. At 582 to 635 (RAKGTMAERWQHLTQPIWGLHHLEYRAQDADVRGLTTLTPVSESSKVVVVESVM) the chain is on the cytoplasmic side. Phosphothreonine occurs at positions 617 and 620. S623 bears the Phosphoserine mark.

This sequence belongs to the sodium:neurotransmitter symporter (SNF) (TC 2.A.22) family. SLC6A8 subfamily. Post-translationally, glycosylated. Predominantly expressed in skeletal muscle and kidney. Also found in brain, heart, colon, testis and prostate.

It localises to the cell membrane. Its subcellular location is the apical cell membrane. The catalysed reaction is creatine(out) + chloride(out) + 2 Na(+)(out) = creatine(in) + chloride(in) + 2 Na(+)(in). Creatine:sodium symporter which mediates the uptake of creatine. Plays an important role in supplying creatine to the brain via the blood-brain barrier. In Homo sapiens (Human), this protein is Sodium- and chloride-dependent creatine transporter 1 (SLC6A8).